Consider the following 166-residue polypeptide: Mitochondrial inner membrane protease subunit 1 (166 aa).

Catalysis depends on residues serine 40 and lysine 83.

Belongs to the peptidase S26 family. IMP1 subfamily. As to quaternary structure, heterodimer of 2 subunits, IMMPL1 and IMMPL2.

It localises to the mitochondrion inner membrane. Catalyzes the removal of transit peptides required for the targeting of proteins from the mitochondrial matrix, across the inner membrane, into the inter-membrane space. Known to process the nuclear encoded protein DIABLO. In Homo sapiens (Human), this protein is Mitochondrial inner membrane protease subunit 1 (IMMP1L).